The sequence spans 371 residues: Lombricine kinase (371 aa).

The region spanning 1-86 (MPKFTARQNF…FDAVINEKHG (86 aa)) is the Phosphagen kinase N-terminal domain. The region spanning 113-355 (YVKSARIRTG…GKLIEYEKLL (243 aa)) is the Phosphagen kinase C-terminal domain. Residues 116-120 (SARIR), H179, R224, R280, 308-313 (RGTGGE), and D323 contribute to the ATP site.

Belongs to the ATP:guanido phosphotransferase family. Homodimer.

The enzyme catalyses L-lombricine + ATP = N-phospho-L-lombricine + ADP + H(+). This chain is Lombricine kinase, found in Eisenia fetida (Red wiggler worm).